Reading from the N-terminus, the 329-residue chain is GTP 3',8-cyclase (329 aa).

The 227-residue stretch at 8 to 234 (AFARKFYYLR…QLRQRSDGPA (227 aa)) folds into the Radical SAM core domain. Residue Arg17 coordinates GTP. Positions 24 and 28 each coordinate [4Fe-4S] cluster. Residue Tyr30 coordinates S-adenosyl-L-methionine. Cys31 is a [4Fe-4S] cluster binding site. Arg68 serves as a coordination point for GTP. Gly72 provides a ligand contact to S-adenosyl-L-methionine. Thr99 lines the GTP pocket. Residue Ser123 coordinates S-adenosyl-L-methionine. GTP is bound at residue Lys160. Met194 contacts S-adenosyl-L-methionine. Residues Cys257 and Cys260 each coordinate [4Fe-4S] cluster. 262-264 (RLR) lines the GTP pocket. Cys274 contacts [4Fe-4S] cluster.

Belongs to the radical SAM superfamily. MoaA family. Monomer and homodimer. [4Fe-4S] cluster is required as a cofactor.

The enzyme catalyses GTP + AH2 + S-adenosyl-L-methionine = (8S)-3',8-cyclo-7,8-dihydroguanosine 5'-triphosphate + 5'-deoxyadenosine + L-methionine + A + H(+). It functions in the pathway cofactor biosynthesis; molybdopterin biosynthesis. Its function is as follows. Catalyzes the cyclization of GTP to (8S)-3',8-cyclo-7,8-dihydroguanosine 5'-triphosphate. In Salmonella newport (strain SL254), this protein is GTP 3',8-cyclase.